The sequence spans 203 residues: ATP-dependent Clp protease proteolytic subunit 2 (203 aa).

Catalysis depends on Ser98, which acts as the Nucleophile. Residue His123 is part of the active site.

This sequence belongs to the peptidase S14 family. Fourteen ClpP subunits assemble into 2 heptameric rings which stack back to back to give a disk-like structure with a central cavity, resembling the structure of eukaryotic proteasomes.

It is found in the cytoplasm. The catalysed reaction is Hydrolysis of proteins to small peptides in the presence of ATP and magnesium. alpha-casein is the usual test substrate. In the absence of ATP, only oligopeptides shorter than five residues are hydrolyzed (such as succinyl-Leu-Tyr-|-NHMec, and Leu-Tyr-Leu-|-Tyr-Trp, in which cleavage of the -Tyr-|-Leu- and -Tyr-|-Trp bonds also occurs).. Functionally, cleaves peptides in various proteins in a process that requires ATP hydrolysis. Has a chymotrypsin-like activity. Plays a major role in the degradation of misfolded proteins. This is ATP-dependent Clp protease proteolytic subunit 2 from Chlamydia muridarum (strain MoPn / Nigg).